Here is a 150-residue protein sequence, read N- to C-terminus: Protein-export protein SecB (150 aa).

The protein belongs to the SecB family. Homotetramer, a dimer of dimers. One homotetramer interacts with 1 SecA dimer.

It is found in the cytoplasm. Functionally, one of the proteins required for the normal export of preproteins out of the cell cytoplasm. It is a molecular chaperone that binds to a subset of precursor proteins, maintaining them in a translocation-competent state. It also specifically binds to its receptor SecA. In Psychrobacter cryohalolentis (strain ATCC BAA-1226 / DSM 17306 / VKM B-2378 / K5), this protein is Protein-export protein SecB.